The primary structure comprises 105 residues: Cuticle protein AMP2 (105 aa).

A disordered region spans residues 1–21 (DRDAQTLTDERSDQGDGNFRY). The Chitin-binding type R&amp;R domain maps to 16 to 81 (DGNFRYEFET…PSSDLLPVGP (66 aa)).

As to expression, arthrodial membrane.

This chain is Cuticle protein AMP2, found in Homarus americanus (American lobster).